A 956-amino-acid polypeptide reads, in one-letter code: MSMTASSSTPRPTPKYDDALILNLSSAAKIERIVDKVKSLSRERFAPEDFSFQWFRSISRVERTTDNNPSAATTAAATATVHSSVSSSAAAAASSEAGGTRVPCVDRWPFFPFRALLVTGTAGAGKTSSIQVLAANLDCVITGTTVIAAQNLSAILNRTRSAQVKTIYRVFGFVSKHVPLADSAVSHETLERYRVCEPHEETTIQRLQINDLLAYWPVIADIVDKCLNMWERKAASASAAAAAAACEDLSELCESNIIVIDECGLMLRYMLQVVVFFYYFYNALGDTRLYRERRVPCIICVGSPTQTEALESRYDHYTQNKSVRKGVDVLSALIQNEVLINYCDIADNWVMFIHNKRCTDLDFGDLLKYMEFGIPLKEEHVAYVDRFVRPPSSIRNPSYAAEMTRLFLSHVEVQAYFKRLHEQIRLSERHRLFDLPVYCVVNNRAYQELCELADPLGDSPQPVELWFRQNLARIINYSQFVDHNLSSEITKEALRPAADVVATNNPSVQAHGGGGSVIGSTGGNDETAFFQDDDTTTAPDSRETLLTLRITYIKGSSVGVNSKVRACVIGYQGTVERFVDILQKDTFIERTPCEQAAYAYSLVSGLLFSAMYYFYVSPYTTEEMLRELARVELPDVSSLCAAAAATAAAPAWSGGENPINNHVDADSSQGGQSVPVSQRMEHGQEETHDIPCLSNHHDDSDAITDAELMDHTSLYADPFFLKYVKPPSLALLSFEETVHMYTTFRDIFLKRYQLMQRLTGGRFATLPLVTYNRRNVVFKANCQISSQTGSFVGMLSHVSPAQTYTLEGYTSDNVLSLPSDRHRIHPEVVQRGLSRLVLRDALGFLFVLDVNVSRFVESAQGKSLHVCTTVDYGLTSRTAMTIAKSQGLSLEKVAVDFGDHPKNLKMSHIYVAMSRVTDPEHLMMNVNPLRLPYEKNTAITPYICRALKDKRTTLIF.

Position 120–127 (120–127) interacts with ATP; the sequence is GTAGAGKT. Residues 658-694 form a disordered region; the sequence is PINNHVDADSSQGGQSVPVSQRMEHGQEETHDIPCLS. The segment covering 667-678 has biased composition (low complexity); it reads SSQGGQSVPVSQ. The segment covering 679–694 has biased composition (basic and acidic residues); sequence RMEHGQEETHDIPCLS.

It belongs to the herpesviridae helicase family. Associates with the primase and the primase-associated factor to form the helicase-primase complex.

The protein localises to the host nucleus. Its function is as follows. Component of the helicase/primase complex. Unwinds the DNA at the replication forks and generates single-stranded DNA for both leading and lagging strand synthesis. The primase synthesizes short RNA primers on the lagging strand that the polymerase elongates using dNTPs. Possesses helicase-like motifs and therefore may act as the helicase subunit of the complex. The chain is DNA replication helicase from Human cytomegalovirus (strain Merlin) (HHV-5).